Here is a 960-residue protein sequence, read N- to C-terminus: ATPase 4, plasma membrane-type (960 aa).

Residues 1–69 are Cytoplasmic-facing; it reads MTTTVEDNRE…EKKESKFLKF (69 aa). The helical transmembrane segment at 70-89 threads the bilayer; it reads LGFMWNPLSWVMEAAAIMAI. Topologically, residues 90–101 are extracellular; the sequence is ALANGGGKPPDW. Residues 102–122 traverse the membrane as a helical segment; the sequence is QDFVGIITLLVINSTISFIEE. At 123–251 the chain is on the cytoplasmic side; it reads NNAGNAAAAL…GHFQQVLTAI (129 aa). The chain crosses the membrane as a helical span at residues 252–272; the sequence is GNFCICSIAVGMLIEIVVMYP. Topologically, residues 273-281 are extracellular; sequence IQHRAYRPG. Residues 282-299 traverse the membrane as a helical segment; that stretch reads IDNLLVLLIGGIPIAMPT. Residues 300–651 lie on the Cytoplasmic side of the membrane; the sequence is VLSVTMAIGS…TSRAIFQRMK (352 aa). Aspartate 337 functions as the 4-aspartylphosphate intermediate in the catalytic mechanism. 2 residues coordinate Mg(2+): aspartate 596 and aspartate 600. The helical transmembrane segment at 652–673 threads the bilayer; the sequence is NYTIYAVSITIRIVLGFMLLAL. Topologically, residues 674–678 are extracellular; it reads IWQFD. The helical transmembrane segment at 679–701 threads the bilayer; sequence FPPFMVLIIAILNDGTIMTISKD. Residues 702-717 are Cytoplasmic-facing; the sequence is RVKPSPLPDSWKLSEI. The helical transmembrane segment at 718 to 738 threads the bilayer; that stretch reads FATGVVFGSYMAMMTVIFFWV. Residues 739 to 763 lie on the Extracellular side of the membrane; it reads SYKTDFFPRTFGVATLEKTAHDDFR. A helical transmembrane segment spans residues 764–784; it reads KLASAIYLQVSIISQALIFVT. Residues 785–796 are Cytoplasmic-facing; the sequence is RSRSWSFVERPG. Residues 797 to 817 traverse the membrane as a helical segment; the sequence is IFLMIAFILAQLVATLIAVYA. Topologically, residues 818-825 are extracellular; sequence NWSFAAIE. The chain crosses the membrane as a helical span at residues 826 to 846; the sequence is GIGWGWAGVIWLYNIIFYIPL. Residues 847-960 are Cytoplasmic-facing; the sequence is DFIKFFIRYA…IETIQQAYTV (114 aa). Phosphothreonine is present on threonine 893. At serine 942 the chain carries Phosphoserine. Residues 958–960 form an interaction with 14-3-3 proteins region; it reads YTV. Threonine 959 carries the phosphothreonine modification.

It belongs to the cation transport ATPase (P-type) (TC 3.A.3) family. Type IIIA subfamily. Binds to 14-3-3 proteins. The binding is induced by phosphorylation of Thr-959. Binding to 14-3-3 proteins activates the H(+)-ATPase. As to expression, expressed in guard cells and roots.

The protein resides in the cell membrane. The enzyme catalyses ATP + H2O + H(+)(in) = ADP + phosphate + 2 H(+)(out). In terms of biological role, the plasma membrane H(+) ATPase of plants and fungi generates a proton gradient that drives the active transport of nutrients by H(+)-symport. The resulting external acidification and/or internal alkinization may mediate growth responses. The chain is ATPase 4, plasma membrane-type (AHA4) from Arabidopsis thaliana (Mouse-ear cress).